A 571-amino-acid chain; its full sequence is Urease subunit alpha (571 aa).

Positions 133–571 (GGIDTHVHFI…LPLTQRYFLF (439 aa)) constitute a Urease domain. 3 residues coordinate Ni(2+): histidine 138, histidine 140, and lysine 221. Lysine 221 is modified (N6-carboxylysine). Histidine 223 lines the substrate pocket. The Ni(2+) site is built by histidine 250 and histidine 276. Histidine 324 functions as the Proton donor in the catalytic mechanism. Position 364 (aspartate 364) interacts with Ni(2+).

Belongs to the metallo-dependent hydrolases superfamily. Urease alpha subunit family. Heterotrimer of UreA (gamma), UreB (beta) and UreC (alpha) subunits. Three heterotrimers associate to form the active enzyme. Requires Ni cation as cofactor. Carboxylation allows a single lysine to coordinate two nickel ions.

It is found in the cytoplasm. The catalysed reaction is urea + 2 H2O + H(+) = hydrogencarbonate + 2 NH4(+). Its pathway is nitrogen metabolism; urea degradation; CO(2) and NH(3) from urea (urease route): step 1/1. This is Urease subunit alpha from Staphylococcus saprophyticus subsp. saprophyticus (strain ATCC 15305 / DSM 20229 / NCIMB 8711 / NCTC 7292 / S-41).